The chain runs to 91 residues: Teretoxin Tan6.2 (91 aa).

The N-terminal stretch at M1–L21 is a signal peptide. Residues G22–K50 constitute a propeptide that is removed on maturation.

Belongs to the teretoxin M (TM) superfamily. Post-translationally, contains 3 disulfide bonds. In terms of tissue distribution, expressed by the venom duct.

The protein localises to the secreted. The polypeptide is Teretoxin Tan6.2 (Terebra anilis (Auger snail)).